The following is a 447-amino-acid chain: Serine/threonine-protein phosphatase 2A 55 kDa regulatory subunit B gamma isoform (447 aa).

WD repeat units follow at residues 22–61 (TEAD…KNAP), 87–128 (EIEE…KRPE), 171–209 (GHTY…RSFN), 220–260 (DLTE…LCDK), 279–317 (EIIS…RPIE), 334–375 (ENDC…DVTL), and 410–446 (DFTK…NSDM).

This sequence belongs to the phosphatase 2A regulatory subunit B family. As to quaternary structure, PP2A consists of a common heterodimeric core enzyme, composed of a 36 kDa catalytic subunit (subunit C) and a 65 kDa constant regulatory subunit (PR65 or subunit A), that associates with a variety of regulatory subunits. Proteins that associate with the core dimer include three families of regulatory subunits B (the R2/B/PR55/B55, R3/B''/PR72/PR130/PR59 and R5/B'/B56 families), the 48 kDa variable regulatory subunit, viral proteins, and cell signaling molecules. Interacts with IER5.

Its function is as follows. The B regulatory subunit might modulate substrate selectivity and catalytic activity, and might also direct the localization of the catalytic enzyme to a particular subcellular compartment. This chain is Serine/threonine-protein phosphatase 2A 55 kDa regulatory subunit B gamma isoform (PPP2R2C), found in Homo sapiens (Human).